We begin with the raw amino-acid sequence, 256 residues long: UPF0246 protein HCH_04801 (256 aa).

This sequence belongs to the UPF0246 family.

The protein is UPF0246 protein HCH_04801 of Hahella chejuensis (strain KCTC 2396).